Reading from the N-terminus, the 350-residue chain is Blue-sensitive opsin (350 aa).

At 1 to 36 (MNGTEGPNFYVPMSNATGVVRSPFEYPQYYLAEPWA) the chain is on the extracellular side. Asn-2 and Asn-15 each carry an N-linked (GlcNAc...) asparagine glycan. Residues 37-61 (FSILAAYMFFLIITGFPINFLTLYV) traverse the membrane as a helical segment. Residues 62-73 (TIEHKKLRTPLN) are Cytoplasmic-facing. The helical transmembrane segment at 74-98 (YILLNLAVADLFMVFGGFTTTMYTS) threads the bilayer. The Extracellular segment spans residues 99 to 113 (MHGYFVFGETGCNLE). An intrachain disulfide couples Cys-110 to Cys-187. Residues 114-133 (GYFATLGGEISLWSLVVLAI) traverse the membrane as a helical segment. Topologically, residues 134-152 (ERWVVVCKPISNFRFGENH) are cytoplasmic. The helical transmembrane segment at 153 to 176 (AIMGLTLTWVMANACAMPPLFGWS) threads the bilayer. Over 177 to 202 (RYIPEGLQCSCGIDYYTLKPEVNNES) the chain is Extracellular. A glycan (N-linked (GlcNAc...) asparagine) is linked at Asn-200. The helical transmembrane segment at 203 to 230 (FVIYMFLVHFTIPLTIISFCYGRLVCAV) threads the bilayer. At 231-252 (KEAAAQQQESETTQRAEREVTR) the chain is on the cytoplasmic side. Residues 253–276 (MVVIMVISFLVCWIPYASVAWYIF) traverse the membrane as a helical segment. At 277 to 284 (THQGSTFG) the chain is on the extracellular side. Residues 285-309 (PIFMTVPSFFAKSSSIYNPMIYICM) traverse the membrane as a helical segment. The residue at position 296 (Lys-296) is an N6-(retinylidene)lysine. Residues 310–350 (NKQFRNCMITTLFCGKNPFEGEEEGSTTKTEASAVSSVSPA) are Cytoplasmic-facing. The segment at 330–350 (GEEEGSTTKTEASAVSSVSPA) is disordered.

This sequence belongs to the G-protein coupled receptor 1 family. Opsin subfamily. Phosphorylated on some or all of the serine and threonine residues present in the C-terminal region. As to expression, rod shaped photoreceptor cells which mediates vision in dim light.

Its subcellular location is the membrane. Its function is as follows. Visual pigments are the light-absorbing molecules that mediate vision. They consist of an apoprotein, opsin, covalently linked to cis-retinal. The sequence is that of Blue-sensitive opsin from Conger conger (Conger eel).